The sequence spans 192 residues: NADH-quinone oxidoreductase subunit B (192 aa).

Residues Cys71, Cys72, Cys136, and Cys166 each contribute to the [4Fe-4S] cluster site.

The protein belongs to the complex I 20 kDa subunit family. In terms of assembly, NDH-1 is composed of 14 different subunits. Subunits NuoB, C, D, E, F, and G constitute the peripheral sector of the complex. [4Fe-4S] cluster is required as a cofactor.

It localises to the cell inner membrane. It catalyses the reaction a quinone + NADH + 5 H(+)(in) = a quinol + NAD(+) + 4 H(+)(out). NDH-1 shuttles electrons from NADH, via FMN and iron-sulfur (Fe-S) centers, to quinones in the respiratory chain. The immediate electron acceptor for the enzyme in this species is believed to be ubiquinone. Couples the redox reaction to proton translocation (for every two electrons transferred, four hydrogen ions are translocated across the cytoplasmic membrane), and thus conserves the redox energy in a proton gradient. This chain is NADH-quinone oxidoreductase subunit B, found in Sinorhizobium medicae (strain WSM419) (Ensifer medicae).